A 254-amino-acid chain; its full sequence is Small ribosomal subunit protein uS3 (254 aa).

Residues 39-109 enclose the KH type-2 domain; sequence IRNYISARLK…EVKIDVIEVI (71 aa). Positions 220 to 254 are disordered; the sequence is EEMKKMQERRNDSRGRGRGDGRGAKRRRRPAAKKA. Basic and acidic residues predominate over residues 221–242; the sequence is EMKKMQERRNDSRGRGRGDGRG. The segment covering 243–254 has biased composition (basic residues); it reads AKRRRRPAAKKA.

Belongs to the universal ribosomal protein uS3 family. Part of the 30S ribosomal subunit. Forms a tight complex with proteins S10 and S14.

Functionally, binds the lower part of the 30S subunit head. Binds mRNA in the 70S ribosome, positioning it for translation. This Chlorobaculum parvum (strain DSM 263 / NCIMB 8327) (Chlorobium vibrioforme subsp. thiosulfatophilum) protein is Small ribosomal subunit protein uS3.